A 301-amino-acid chain; its full sequence is Glycine--tRNA ligase alpha subunit (301 aa).

It belongs to the class-II aminoacyl-tRNA synthetase family. As to quaternary structure, tetramer of two alpha and two beta subunits.

The protein localises to the cytoplasm. It catalyses the reaction tRNA(Gly) + glycine + ATP = glycyl-tRNA(Gly) + AMP + diphosphate. The chain is Glycine--tRNA ligase alpha subunit from Neisseria meningitidis serogroup C (strain 053442).